A 130-amino-acid chain; its full sequence is Odontogenesis associated phosphoprotein (130 aa).

The N-terminal stretch at 1-23 (MARRHCFSYWLLVCWLVVTVAEG) is a signal peptide.

Highly expressed in placenta.

The protein resides in the secreted. May promote nucleation of hydroxyapatite. The polypeptide is Odontogenesis associated phosphoprotein (Homo sapiens (Human)).